A 412-amino-acid chain; its full sequence is Autophagy-related protein 18 (412 aa).

3 WD repeats span residues 100-139, 142-183, and 186-226; these read RFNKSVLTVRLNRDRIVVCLEDCIYIYNLKDMKMMHNIMD, TNKL…SVST, and AHEG…RLFE. The L/FRRG motif motif lies at 227–230; that stretch reads FRRG. The WD 4 repeat unit spans residues 232 to 271; it reads TRCVNIYSLCFSSDSKYLTSSSNTETVHVFKLEKTEGVDN. The interval 363–412 is disordered; sequence HNIGPKSDTSRASPTSTGSGGAAKSAEASNQSVPNMDDPDDFPPMSHTSG. A compositionally biased stretch (low complexity) spans 372-391; sequence SRASPTSTGSGGAAKSAEAS.

This sequence belongs to the WD repeat PROPPIN family. In terms of tissue distribution, expressed in neurons and intestinal cells.

The protein resides in the cytoplasmic vesicle. It localises to the phagosome membrane. The protein localises to the cytoplasm. In terms of biological role, component of the autophagy machinery that is recruited to phosphatidylinositols on preautophagosomal structures, which are early autophagic structures, to promote autophagosome formation, and the subsequent degradation and clearance of engulfed apoptotic cells and P-granules in somatic cells. In particular, binds with high affinity to phosphatidylinositols including phosphatidylinositol 3-phosphate (PtdIns(3)P), phosphatidylinositol 4-phosphate (PtdIns(4)P), and phosphatidylinositol 5-phosphate (PtdIns(5)P), and more weakly to phosphatidylinositol 3,5-bisphosphate (PtdIns(3,5)P2). Plays a role in mitophagy, which is the autophagic consumption of mitochondria, in response to dietary restriction. Involved in xenophagy, the autophagy-mediated degradation of pathogens and pathogen products, such as toxins. Also plays a role in membrane-pore repair. In a daf-18/PTEN- and daf-16/FOXO-dependent manner, required for the proliferation of germ stem cell progenitors in the gonad during the late phases of larval development. By regulating the release of neurotransmitters and neuropeptides, involved in the control of lifespan in response to dietary restriction and daf-2 signaling. Probably through its involvement in autophagy, required for dauer formation. The sequence is that of Autophagy-related protein 18 from Caenorhabditis elegans.